The primary structure comprises 237 residues: Phosphoribosylaminoimidazole-succinocarboxamide synthase (237 aa).

Belongs to the SAICAR synthetase family.

It carries out the reaction 5-amino-1-(5-phospho-D-ribosyl)imidazole-4-carboxylate + L-aspartate + ATP = (2S)-2-[5-amino-1-(5-phospho-beta-D-ribosyl)imidazole-4-carboxamido]succinate + ADP + phosphate + 2 H(+). It participates in purine metabolism; IMP biosynthesis via de novo pathway; 5-amino-1-(5-phospho-D-ribosyl)imidazole-4-carboxamide from 5-amino-1-(5-phospho-D-ribosyl)imidazole-4-carboxylate: step 1/2. The polypeptide is Phosphoribosylaminoimidazole-succinocarboxamide synthase (Campylobacter fetus subsp. fetus (strain 82-40)).